The sequence spans 299 residues: Farnesyl diphosphate synthase (299 aa).

The isopentenyl diphosphate site is built by K45, R48, and H77. Residues D84 and D90 each coordinate Mg(2+). R95 is a (2E)-geranyl diphosphate binding site. R96 is a binding site for isopentenyl diphosphate. (2E)-geranyl diphosphate contacts are provided by K181, T182, Q220, and K237.

Belongs to the FPP/GGPP synthase family. Mg(2+) serves as cofactor.

The protein resides in the cytoplasm. It carries out the reaction isopentenyl diphosphate + (2E)-geranyl diphosphate = (2E,6E)-farnesyl diphosphate + diphosphate. This is Farnesyl diphosphate synthase (ispA) from Escherichia coli (strain K12).